Consider the following 84-residue polypeptide: Putative membrane protein insertion efficiency factor (84 aa).

Residues Gly63 to Ser84 are disordered.

The protein belongs to the UPF0161 family.

It localises to the cell membrane. Could be involved in insertion of integral membrane proteins into the membrane. In Streptococcus mutans serotype c (strain ATCC 700610 / UA159), this protein is Putative membrane protein insertion efficiency factor.